The following is a 324-amino-acid chain: uncharacterized protein (324 aa).

Positions 1-58 (MDIKVMEYAAEIARRQSFTKAAEHLHIAQPSLSQQIKKLEAELGLTLFHRSHGSVTLT) constitute an HTH lysR-type domain. A DNA-binding region (H-T-H motif) is located at residues 18–37 (FTKAAEHLHIAQPSLSQQIK).

The protein belongs to the LysR transcriptional regulatory family.

This is an uncharacterized protein from Bacillus subtilis (strain 168).